The sequence spans 142 residues: Peptide methionine sulfoxide reductase MsrB (142 aa).

Positions 2–125 constitute a MsrB domain; sequence LKKDKSELTD…NSAAIQFIPY (124 aa). C114 acts as the Nucleophile in catalysis.

The protein belongs to the MsrB Met sulfoxide reductase family.

The enzyme catalyses L-methionyl-[protein] + [thioredoxin]-disulfide + H2O = L-methionyl-(R)-S-oxide-[protein] + [thioredoxin]-dithiol. The chain is Peptide methionine sulfoxide reductase MsrB from Staphylococcus aureus (strain bovine RF122 / ET3-1).